The primary structure comprises 163 residues: Nucleotide-binding protein APJL_1242 (163 aa).

It belongs to the YajQ family.

In terms of biological role, nucleotide-binding protein. The chain is Nucleotide-binding protein APJL_1242 from Actinobacillus pleuropneumoniae serotype 3 (strain JL03).